A 463-amino-acid polypeptide reads, in one-letter code: MLAFLNQVRKPTLDLPLEVRRKMWFKPFMQSYLVVFIGYLTMYLIRKNFNIAQNDMISTYGLSMTQLGMIGLGFSITYGVGKTLVSYYADGKNTKQFLPFMLILSAICMLGFSASMGSGSVSLFLMIAFYALSGFFQSTGGSCSYSTITKWTPRRKRGTFLGFWNISHNLGGAGAAGVALFGANYLFDGHVIGMFIFPSIIALIVGFIGLRYGSDSPESYGLGKAEELFGEEISEEDKETESTDMTKWQIFVEYVLKNKVIWLLCFANIFLYVVRIGIDQWSTVYAFQELKLSKAVAIQGFTLFEAGALVGTLLWGWLSDLANGRRGLVACIALALIIATLGVYQHASNEYIYLASLFALGFLVFGPQLLIGVAAVGFVPKKAIGAADGIKGTFAYLIGDSFAKLGLGMIADGTPVFGLTGWAGTFAALDIAAIGCICLMAIVAVMEERKIRREKKIQQLTVA.

The Cytoplasmic portion of the chain corresponds to 1–24; the sequence is MLAFLNQVRKPTLDLPLEVRRKMW. Residues 25-45 traverse the membrane as a helical segment; the sequence is FKPFMQSYLVVFIGYLTMYLI. The Periplasmic portion of the chain corresponds to 46 to 60; that stretch reads RKNFNIAQNDMISTY. Residues 61-81 form a helical membrane-spanning segment; the sequence is GLSMTQLGMIGLGFSITYGVG. Residues 82-96 lie on the Cytoplasmic side of the membrane; it reads KTLVSYYADGKNTKQ. A helical membrane pass occupies residues 97 to 117; the sequence is FLPFMLILSAICMLGFSASMG. At 118–120 the chain is on the periplasmic side; the sequence is SGS. Residues 121 to 141 form a helical membrane-spanning segment; that stretch reads VSLFLMIAFYALSGFFQSTGG. At 142–159 the chain is on the cytoplasmic side; that stretch reads SCSYSTITKWTPRRKRGT. A helical transmembrane segment spans residues 160-180; it reads FLGFWNISHNLGGAGAAGVAL. The Periplasmic portion of the chain corresponds to 181-189; it reads FGANYLFDG. Residues 190–210 form a helical membrane-spanning segment; that stretch reads HVIGMFIFPSIIALIVGFIGL. The Cytoplasmic segment spans residues 211–259; that stretch reads RYGSDSPESYGLGKAEELFGEEISEEDKETESTDMTKWQIFVEYVLKNK. A helical membrane pass occupies residues 260–280; it reads VIWLLCFANIFLYVVRIGIDQ. The Periplasmic portion of the chain corresponds to 281-297; it reads WSTVYAFQELKLSKAVA. The chain crosses the membrane as a helical span at residues 298–318; the sequence is IQGFTLFEAGALVGTLLWGWL. Residues 319 to 326 are Cytoplasmic-facing; it reads SDLANGRR. A helical transmembrane segment spans residues 327–347; sequence GLVACIALALIIATLGVYQHA. Over 348–357 the chain is Periplasmic; that stretch reads SNEYIYLASL. Residues 358–378 form a helical membrane-spanning segment; that stretch reads FALGFLVFGPQLLIGVAAVGF. Over 379–382 the chain is Cytoplasmic; that stretch reads VPKK. A helical transmembrane segment spans residues 383-403; sequence AIGAADGIKGTFAYLIGDSFA. Residues 404 to 425 are Periplasmic-facing; the sequence is KLGLGMIADGTPVFGLTGWAGT. A helical transmembrane segment spans residues 426–446; the sequence is FAALDIAAIGCICLMAIVAVM. Residues 447 to 463 are Cytoplasmic-facing; the sequence is EERKIRREKKIQQLTVA.

The protein belongs to the major facilitator superfamily. Organophosphate:Pi antiporter (OPA) (TC 2.A.1.4) family.

It localises to the cell inner membrane. Its function is as follows. Mediates the exchange of external hexose 6-phosphate and internal inorganic phosphate. The protein is Hexose-6-phosphate:phosphate antiporter (uhpT) of Escherichia coli O157:H7.